A 345-amino-acid polypeptide reads, in one-letter code: Anthranilate phosphoribosyltransferase (345 aa).

5-phospho-alpha-D-ribose 1-diphosphate is bound by residues Gly-84, 87 to 88, Thr-92, 94 to 97, 112 to 120, and Ser-124; these read GD, NVTT, and KHGNRSVSS. Position 84 (Gly-84) interacts with anthranilate. Residue Thr-96 participates in Mg(2+) binding. Residue Asn-115 participates in anthranilate binding. An anthranilate-binding site is contributed by Arg-170. Mg(2+) is bound by residues Asp-228 and Glu-229.

Belongs to the anthranilate phosphoribosyltransferase family. Homodimer. Mg(2+) is required as a cofactor.

The catalysed reaction is N-(5-phospho-beta-D-ribosyl)anthranilate + diphosphate = 5-phospho-alpha-D-ribose 1-diphosphate + anthranilate. The protein operates within amino-acid biosynthesis; L-tryptophan biosynthesis; L-tryptophan from chorismate: step 2/5. Functionally, catalyzes the transfer of the phosphoribosyl group of 5-phosphorylribose-1-pyrophosphate (PRPP) to anthranilate to yield N-(5'-phosphoribosyl)-anthranilate (PRA). This Corynebacterium aurimucosum (strain ATCC 700975 / DSM 44827 / CIP 107346 / CN-1) (Corynebacterium nigricans) protein is Anthranilate phosphoribosyltransferase.